Here is a 243-residue protein sequence, read N- to C-terminus: Voltage-gated monoatomic cation channel TMEM109 (243 aa).

Positions Met-1–Ala-33 are cleaved as a signal peptide. Over Gln-34–Gln-83 the chain is Lumenal. A helical membrane pass occupies residues Val-84–Ala-104. Topologically, residues Gln-105–Gly-135 are cytoplasmic. The chain crosses the membrane as a helical span at residues Ala-136–Leu-156. Over Gly-157 to Arg-185 the chain is Lumenal. A helical membrane pass occupies residues Ala-186–Ser-205. Residues Arg-206–Glu-243 are Cytoplasmic-facing.

In terms of assembly, homooligomer. Interacts with CRYAB; in the cellular response to DNA damage. Post-translationally, the N-terminus is blocked. Widely expressed. Expressed in skeletal, cardiac and smooth muscle cells, in brain, including neuroglial cells, cerebral cortex neurons and cerebellum, but not Purkinje cells. Also detected in Paneth and Goblet cells of the small intestine (but not in the epithelium), duodenal gland, pancreas, parotid gland, testis, thyroid gland and adrenal gland, as well as in epidermis, choroid plexus, ductus epididymidis, lymphocytes, fibroblasts, endothelial cells and seminiferous epithelial cells (at protein level). Not detected in mucous cells of the duodenal gland, in hepatocytes nor in uriniferous tubules.

It is found in the nucleus outer membrane. It localises to the endoplasmic reticulum membrane. The protein localises to the sarcoplasmic reticulum membrane. The catalysed reaction is K(+)(in) = K(+)(out). It carries out the reaction Ca(2+)(in) = Ca(2+)(out). Functions as a voltage-gated monoatomic cation channel permeable to both potassium and calcium. Plays a role in the cellular response to DNA damage. The protein is Voltage-gated monoatomic cation channel TMEM109 of Oryctolagus cuniculus (Rabbit).